Reading from the N-terminus, the 131-residue chain is Small ribosomal subunit protein uS8 (131 aa).

Belongs to the universal ribosomal protein uS8 family. As to quaternary structure, part of the 30S ribosomal subunit. Contacts proteins S5 and S12.

Functionally, one of the primary rRNA binding proteins, it binds directly to 16S rRNA central domain where it helps coordinate assembly of the platform of the 30S subunit. This Bacteroides thetaiotaomicron (strain ATCC 29148 / DSM 2079 / JCM 5827 / CCUG 10774 / NCTC 10582 / VPI-5482 / E50) protein is Small ribosomal subunit protein uS8.